The primary structure comprises 296 residues: Bifunctional protein FolD (296 aa).

NADP(+) is bound by residues G166–S168, S195, and T236.

The protein belongs to the tetrahydrofolate dehydrogenase/cyclohydrolase family. As to quaternary structure, homodimer.

It carries out the reaction (6R)-5,10-methylene-5,6,7,8-tetrahydrofolate + NADP(+) = (6R)-5,10-methenyltetrahydrofolate + NADPH. It catalyses the reaction (6R)-5,10-methenyltetrahydrofolate + H2O = (6R)-10-formyltetrahydrofolate + H(+). The protein operates within one-carbon metabolism; tetrahydrofolate interconversion. Functionally, catalyzes the oxidation of 5,10-methylenetetrahydrofolate to 5,10-methenyltetrahydrofolate and then the hydrolysis of 5,10-methenyltetrahydrofolate to 10-formyltetrahydrofolate. The protein is Bifunctional protein FolD of Dehalococcoides mccartyi (strain ATCC BAA-2100 / JCM 16839 / KCTC 5957 / BAV1).